A 718-amino-acid chain; its full sequence is MITEPSLTGISGMVNRNRLSGLPDQPSSHSFTPVTLYDGFNYNLSSDHINTVVAAPENSVFIREEEEEEDPADDFDFSDAVLGYISQMLNEEDMDDKVCMLQESLDLEAAERSLYEAIGKKYPPSPERNLAFAERNSENLDRVVPGNYTGGDCIGFGNGGIKPLSSGFTLDFRNPQSCSSILSVPQSNGLITIYGDGIDESSKNNRENHQSVWLFRREIEEANRFNPEENELIVNFREENCVSKARKNSSRDEICVEEERSSKLPAVFGEDILRSDVVDKILVHVPGGESMKEFNALRDVLKKGVEKKKASDAQGGKRRARGRGRGRGRGGGGGQNGKKEVVDLRSLLIHCAQAVAADDRRCAGQLLKQIRLHSTPFGDGNQRLAHCFANGLEARLAGTGSQIYKGIVSKPRSAAAVLKAHQLFLACCPFRKLSYFITNKTIRDLVGNSQRVHVIDFGILYGFQWPTLIHRFSMYGSPKVRITGIEFPQPGFRPAQRVEETGQRLAAYAKLFGVPFEYKAIAKKWDAIQLEDLDIDRDEITVVNCLYRAENLHDESVKVESCRDTVLNLIGKINPDLFVFGIVNGAYNAPFFVTRFREALFHFSSIFDMLETIVPREDEERMFLEMEVFGREALNVIACEGWERVERPETYKQWHVRAMRSGLVQVPFDPSIMKTSLHKVHTFYHKDFVIDQDNRWLLQGWKGRTVMALSVWKPESKA.

The interval V305–K338 is disordered. Over residues G316–G328 the composition is skewed to basic residues. The GRAS domain maps to Q335–K713. The leucine repeat I (LRI) stretch occupies residues V342–Q402. Residues H421–G484 are VHIID. The VHIID signature appears at V452 to D456. Positions E500 to D532 are leucine repeat II (LRII). Residues T541 to N635 form a PFYRE region. An SAW region spans residues A638–K713.

The protein belongs to the GRAS family. As to expression, expressed in cotyledons, leaves and flowers, and in the elongation zone in root.

Its subcellular location is the nucleus. Its function is as follows. Probable transcription factor involved in plant development. This is Scarecrow-like protein 9 (SCL9) from Arabidopsis thaliana (Mouse-ear cress).